Reading from the N-terminus, the 205-residue chain is Molybdenum cofactor guanylyltransferase (205 aa).

Residues 14–16 (LAG), Lys-27, Asp-77, and Asp-107 contribute to the GTP site. Position 107 (Asp-107) interacts with Mg(2+).

The protein belongs to the MobA family. In terms of assembly, monomer. The cofactor is Mg(2+).

It is found in the cytoplasm. The catalysed reaction is Mo-molybdopterin + GTP + H(+) = Mo-molybdopterin guanine dinucleotide + diphosphate. Transfers a GMP moiety from GTP to Mo-molybdopterin (Mo-MPT) cofactor (Moco or molybdenum cofactor) to form Mo-molybdopterin guanine dinucleotide (Mo-MGD) cofactor. The chain is Molybdenum cofactor guanylyltransferase from Burkholderia lata (strain ATCC 17760 / DSM 23089 / LMG 22485 / NCIMB 9086 / R18194 / 383).